An 885-amino-acid chain; its full sequence is Alanine--tRNA ligase (885 aa).

H574, H578, C685, and H689 together coordinate Zn(2+).

The protein belongs to the class-II aminoacyl-tRNA synthetase family. It depends on Zn(2+) as a cofactor.

It is found in the cytoplasm. The enzyme catalyses tRNA(Ala) + L-alanine + ATP = L-alanyl-tRNA(Ala) + AMP + diphosphate. Functionally, catalyzes the attachment of alanine to tRNA(Ala) in a two-step reaction: alanine is first activated by ATP to form Ala-AMP and then transferred to the acceptor end of tRNA(Ala). Also edits incorrectly charged Ser-tRNA(Ala) and Gly-tRNA(Ala) via its editing domain. The polypeptide is Alanine--tRNA ligase (Deinococcus geothermalis (strain DSM 11300 / CIP 105573 / AG-3a)).